The primary structure comprises 128 residues: Large ribosomal subunit protein bL20c (128 aa).

The protein belongs to the bacterial ribosomal protein bL20 family.

It is found in the plastid. The protein localises to the chloroplast. Its function is as follows. Binds directly to 23S ribosomal RNA and is necessary for the in vitro assembly process of the 50S ribosomal subunit. It is not involved in the protein synthesizing functions of that subunit. The sequence is that of Large ribosomal subunit protein bL20c from Daucus carota (Wild carrot).